The sequence spans 178 residues: Ribosome maturation factor RimP (178 aa).

It belongs to the RimP family.

It localises to the cytoplasm. Functionally, required for maturation of 30S ribosomal subunits. This Corynebacterium glutamicum (strain ATCC 13032 / DSM 20300 / JCM 1318 / BCRC 11384 / CCUG 27702 / LMG 3730 / NBRC 12168 / NCIMB 10025 / NRRL B-2784 / 534) protein is Ribosome maturation factor RimP.